The primary structure comprises 138 residues: Transcription antitermination protein NusB (138 aa).

This sequence belongs to the NusB family.

Involved in transcription antitermination. Required for transcription of ribosomal RNA (rRNA) genes. Binds specifically to the boxA antiterminator sequence of the ribosomal RNA (rrn) operons. The protein is Transcription antitermination protein NusB of Desulforudis audaxviator (strain MP104C).